The primary structure comprises 537 residues: uncharacterized protein (537 aa).

This is an uncharacterized protein from Bacillus subtilis (strain 168).